Consider the following 421-residue polypeptide: Tyrosine--tRNA ligase (421 aa).

Tyr-35 serves as a coordination point for L-tyrosine. Residues 40 to 49 carry the 'HIGH' region motif; sequence PTADSLHIGH. L-tyrosine-binding residues include Tyr-170 and Gln-174. Positions 232-236 match the 'KMSKS' region motif; sequence KFGKT. An ATP-binding site is contributed by Lys-235. The region spanning 355-421 is the S4 RNA-binding domain; it reads LSLVDVLVES…GKKKYFLITY (67 aa).

Belongs to the class-I aminoacyl-tRNA synthetase family. TyrS type 1 subfamily. Homodimer.

The protein localises to the cytoplasm. The catalysed reaction is tRNA(Tyr) + L-tyrosine + ATP = L-tyrosyl-tRNA(Tyr) + AMP + diphosphate + H(+). Catalyzes the attachment of tyrosine to tRNA(Tyr) in a two-step reaction: tyrosine is first activated by ATP to form Tyr-AMP and then transferred to the acceptor end of tRNA(Tyr). The chain is Tyrosine--tRNA ligase from Bacillus velezensis (strain DSM 23117 / BGSC 10A6 / LMG 26770 / FZB42) (Bacillus amyloliquefaciens subsp. plantarum).